Consider the following 208-residue polypeptide: Imidazoleglycerol-phosphate dehydratase (208 aa).

This sequence belongs to the imidazoleglycerol-phosphate dehydratase family.

The protein localises to the cytoplasm. It catalyses the reaction D-erythro-1-(imidazol-4-yl)glycerol 3-phosphate = 3-(imidazol-4-yl)-2-oxopropyl phosphate + H2O. It functions in the pathway amino-acid biosynthesis; L-histidine biosynthesis; L-histidine from 5-phospho-alpha-D-ribose 1-diphosphate: step 6/9. In Prochlorococcus marinus (strain MIT 9211), this protein is Imidazoleglycerol-phosphate dehydratase.